We begin with the raw amino-acid sequence, 82 residues long: Small ribosomal subunit protein uS17 (82 aa).

This sequence belongs to the universal ribosomal protein uS17 family. As to quaternary structure, part of the 30S ribosomal subunit.

One of the primary rRNA binding proteins, it binds specifically to the 5'-end of 16S ribosomal RNA. This Pelobacter propionicus (strain DSM 2379 / NBRC 103807 / OttBd1) protein is Small ribosomal subunit protein uS17.